A 206-amino-acid polypeptide reads, in one-letter code: MRLILLGPPGAGKGTQAQRLVHHYGIIQLSTGDMLRAAVAAGTPVGLKAKDIMASGGLVPDDVVIGIISDRLEQADAKDGFILDGFPRTVPQAEALDILLQSKNLALDAVIELRVDESALLQRVENRVAETTARGEQVRADDNPEVLSQRLASYRALTEPLIRYYSERGRLLTVDGMMAIDDVTRDIRRVLRRSGVPMSKFGVRRW.

10 to 15 is a binding site for ATP; sequence GAGKGT. The interval 30–59 is NMP; the sequence is STGDMLRAAVAAGTPVGLKAKDIMASGGLV. Residues Thr31, Arg36, 57-59, 85-88, and Gln92 each bind AMP; these read GLV and GFPR. Residues 126–142 form an LID region; the sequence is NRVAETTARGEQVRADD. Arg127 is an ATP binding site. Positions 139 and 150 each coordinate AMP. An ATP-binding site is contributed by Met178.

It belongs to the adenylate kinase family. Monomer.

It is found in the cytoplasm. The enzyme catalyses AMP + ATP = 2 ADP. It functions in the pathway purine metabolism; AMP biosynthesis via salvage pathway; AMP from ADP: step 1/1. Its function is as follows. Catalyzes the reversible transfer of the terminal phosphate group between ATP and AMP. Plays an important role in cellular energy homeostasis and in adenine nucleotide metabolism. This Nitrobacter winogradskyi (strain ATCC 25391 / DSM 10237 / CIP 104748 / NCIMB 11846 / Nb-255) protein is Adenylate kinase.